Consider the following 274-residue polypeptide: Thiazole synthase (274 aa).

The active-site Schiff-base intermediate with DXP is K115. Residues G176, 202 to 203 (AG), and 224 to 225 (NS) each bind 1-deoxy-D-xylulose 5-phosphate.

This sequence belongs to the ThiG family. Homotetramer. Forms heterodimers with either ThiH or ThiS.

The protein localises to the cytoplasm. It catalyses the reaction [ThiS sulfur-carrier protein]-C-terminal-Gly-aminoethanethioate + 2-iminoacetate + 1-deoxy-D-xylulose 5-phosphate = [ThiS sulfur-carrier protein]-C-terminal Gly-Gly + 2-[(2R,5Z)-2-carboxy-4-methylthiazol-5(2H)-ylidene]ethyl phosphate + 2 H2O + H(+). It participates in cofactor biosynthesis; thiamine diphosphate biosynthesis. Its function is as follows. Catalyzes the rearrangement of 1-deoxy-D-xylulose 5-phosphate (DXP) to produce the thiazole phosphate moiety of thiamine. Sulfur is provided by the thiocarboxylate moiety of the carrier protein ThiS. In vitro, sulfur can be provided by H(2)S. The protein is Thiazole synthase of Psychrobacter arcticus (strain DSM 17307 / VKM B-2377 / 273-4).